The primary structure comprises 427 residues: Male abnormal protein mab-31 (427 aa).

The interval 68 to 102 is disordered; it reads PIGTGRFPNPSPPRSSSGTNTPIRKTPGSRPDRGK.

It is found in the nucleus. Functionally, putative transcription factor. Acts in a TGF-beta-like pathway during development of male-specific genital sensilla (simple sense organs), known as rays. Involved in production of reactive oxygen species (ROS), acting downstream of the TGF-beta-like dbl-1 signaling pathway. Involved in locomotory behavior. This is Male abnormal protein mab-31 from Caenorhabditis elegans.